The primary structure comprises 909 residues: Disintegrin and metalloproteinase domain-containing protein 12 (909 aa).

An N-terminal signal peptide occupies residues 1–28; sequence MAARPLPVSPARALLLALAGALLAPCEA. The propeptide occupies 29-207; that stretch reads RGVSLWNQGR…SQTWARRHKR (179 aa). Residues asparagine 111 and asparagine 149 are each glycosylated (N-linked (GlcNAc...) asparagine). Positions 177 to 184 match the Cysteine switch motif; sequence GSCGSHHN. Residues cysteine 179 and histidine 350 each coordinate Zn(2+). At 208–708 the chain is on the extracellular side; the sequence is ETLKATKYVE…GPIRQADNQG (501 aa). Residues 214-416 form the Peptidase M12B domain; that stretch reads KYVELVIVAD…GMGVCLFNLP (203 aa). Cystine bridges form between cysteine 325-cysteine 411, cysteine 367-cysteine 395, and cysteine 369-cysteine 378. Glutamate 351 is a catalytic residue. Histidine 354 and histidine 360 together coordinate Zn(2+). 2 N-linked (GlcNAc...) asparagine glycosylation sites follow: asparagine 381 and asparagine 452. A Disintegrin domain is found at 424-510; it reads GQKCGNRFVE…HCPANVYLHD (87 aa). Cysteines 482 and 502 form a disulfide. Asparagine 651 carries N-linked (GlcNAc...) asparagine glycosylation. Residues 656–688 enclose the EGF-like domain; the sequence is GVHECAMQCHGRGVCNNRKNCHCEAHWAPPFCD. 3 cysteine pairs are disulfide-bonded: cysteine 660/cysteine 670, cysteine 664/cysteine 676, and cysteine 678/cysteine 687. Residues 709-729 traverse the membrane as a helical segment; the sequence is LTIGILVTILCLLAAGFVVYL. Residues 730–909 lie on the Cytoplasmic side of the membrane; it reads KRKTLIRLLF…PRSTHTAYIK (180 aa). The disordered stretch occupies residues 822–862; the sequence is LHRAPRAPSVPARPLPAKPALRQAQGTCKPNPPQKPLPADP. Residues 828–834 carry the SH3-binding; class II motif; the sequence is APSVPAR. An SH3-binding; class I motif is present at residues 834–841; that stretch reads RPLPAKPA. The segment covering 851 to 860 has biased composition (pro residues); it reads PNPPQKPLPA. An SH3-binding; class I motif is present at residues 885-891; it reads RLAPLRP. Phosphotyrosine; by SRC is present on tyrosine 907.

As to quaternary structure, interacts with alpha-actinin-2 and with syndecans. Interacts with SH3PXD2A. Interacts with FST3. Interacts with RACK1; the interaction is required for PKC-dependent translocation of ADAM12 to the cell membrane. Zn(2+) serves as cofactor. Post-translationally, the precursor is cleaved by a furin endopeptidase. Isoform 1 is expressed in placenta and skeletal, cardiac, and smooth muscle. Isoform 2 seems to be expressed only in placenta or in embryo and fetus. Both forms were expressed in some tumor cells lines. Not detected in brain, lung, liver, kidney or pancreas.

The protein resides in the cell membrane. The protein localises to the secreted. In terms of biological role, involved in skeletal muscle regeneration, specifically at the onset of cell fusion. Also involved in macrophage-derived giant cells (MGC) and osteoclast formation from mononuclear precursors. This Homo sapiens (Human) protein is Disintegrin and metalloproteinase domain-containing protein 12 (ADAM12).